The chain runs to 350 residues: RNA 3'-terminal phosphate cyclase (350 aa).

ATP contacts are provided by residues Gln-107 and 290-294; that span reads FLGDQ. His-316 serves as the catalytic Tele-AMP-histidine intermediate.

Belongs to the RNA 3'-terminal cyclase family. Type 1 subfamily.

The protein resides in the cytoplasm. It carries out the reaction a 3'-end 3'-phospho-ribonucleotide-RNA + ATP = a 3'-end 2',3'-cyclophospho-ribonucleotide-RNA + AMP + diphosphate. In terms of biological role, catalyzes the conversion of 3'-phosphate to a 2',3'-cyclic phosphodiester at the end of RNA. The mechanism of action of the enzyme occurs in 3 steps: (A) adenylation of the enzyme by ATP; (B) transfer of adenylate to an RNA-N3'P to produce RNA-N3'PP5'A; (C) and attack of the adjacent 2'-hydroxyl on the 3'-phosphorus in the diester linkage to produce the cyclic end product. The biological role of this enzyme is unknown but it is likely to function in some aspects of cellular RNA processing. The chain is RNA 3'-terminal phosphate cyclase from Gloeothece citriformis (strain PCC 7424) (Cyanothece sp. (strain PCC 7424)).